The sequence spans 316 residues: uncharacterized protein (316 aa).

BNR repeat units lie at residues 62 to 73, 124 to 135, 196 to 207, and 242 to 253; these read FISDSQGLKFSP, KISVDNGLTWSN, FISRDGGLTWRV, and YFSLDQGRTWNQ.

This is an uncharacterized protein from Saccharomyces cerevisiae (strain ATCC 204508 / S288c) (Baker's yeast).